Reading from the N-terminus, the 428-residue chain is ORC1-type DNA replication protein 5 (428 aa).

Residues 62–66 (TGKSL), tyrosine 219, and arginine 231 each bind ATP.

Belongs to the CDC6/cdc18 family.

Its function is as follows. Involved in regulation of DNA replication. In Halobacterium salinarum (strain ATCC 700922 / JCM 11081 / NRC-1) (Halobacterium halobium), this protein is ORC1-type DNA replication protein 5 (orc5).